Here is an 81-residue protein sequence, read N- to C-terminus: Small ribosomal subunit protein uS17 (81 aa).

The protein belongs to the universal ribosomal protein uS17 family. In terms of assembly, part of the 30S ribosomal subunit.

Its function is as follows. One of the primary rRNA binding proteins, it binds specifically to the 5'-end of 16S ribosomal RNA. This chain is Small ribosomal subunit protein uS17, found in Trichormus variabilis (strain ATCC 29413 / PCC 7937) (Anabaena variabilis).